Here is a 197-residue protein sequence, read N- to C-terminus: uncharacterized protein (197 aa).

Disordered stretches follow at residues 1–30 (MSDD…PKVV) and 115–174 (PSLK…KQEL). A compositionally biased stretch (low complexity) spans 21–30 (KPTSTTPKVV). The span at 123-137 (KVDEDDDQIYEDKEE) shows a compositional bias: acidic residues. A compositionally biased stretch (basic residues) spans 157–170 (KSNKKVAPKQKKKS).

This is an uncharacterized protein from Dictyostelium discoideum (Social amoeba).